The sequence spans 141 residues: Large ribosomal subunit protein uL11 (141 aa).

The protein belongs to the universal ribosomal protein uL11 family. Part of the ribosomal stalk of the 50S ribosomal subunit. Interacts with L10 and the large rRNA to form the base of the stalk. L10 forms an elongated spine to which L12 dimers bind in a sequential fashion forming a multimeric L10(L12)X complex. In terms of processing, one or more lysine residues are methylated.

Its function is as follows. Forms part of the ribosomal stalk which helps the ribosome interact with GTP-bound translation factors. The chain is Large ribosomal subunit protein uL11 from Chloroherpeton thalassium (strain ATCC 35110 / GB-78).